The following is a 411-amino-acid chain: Citrate synthase (411 aa).

Active-site residues include H304 and D363.

Belongs to the citrate synthase family.

It carries out the reaction oxaloacetate + acetyl-CoA + H2O = citrate + CoA + H(+). Its pathway is carbohydrate metabolism; tricarboxylic acid cycle; isocitrate from oxaloacetate: step 1/2. The polypeptide is Citrate synthase (gltA) (Rickettsia helvetica).